The sequence spans 594 residues: Cytoplasmic polyadenylation element-binding protein 2 (594 aa).

The segment covering 72–90 has biased composition (basic and acidic residues); the sequence is KEREKVDEEKEGVERREEN. Disordered stretches follow at residues 72–91 and 367–388; these read KERE…EENG and GGGF…STSE. Positions 367–378 are enriched in gly residues; the sequence is GGGFNSGSGSGN. Positions 458–540 constitute an RRM domain; it reads LVAFIGGVPR…KRVEIKPYFF (83 aa).

Cytoplasmic polyadenylation element binding protein that binds to and regulates the translation of specific mRNAs. The sequence is that of Cytoplasmic polyadenylation element-binding protein 2 (cpb-2) from Caenorhabditis japonica.